A 950-amino-acid polypeptide reads, in one-letter code: Glycine dehydrogenase (decarboxylating) 1 (950 aa).

At Lys704 the chain carries N6-(pyridoxal phosphate)lysine.

Belongs to the GcvP family. In terms of assembly, the glycine cleavage system is composed of four proteins: P, T, L and H. Pyridoxal 5'-phosphate is required as a cofactor.

The catalysed reaction is N(6)-[(R)-lipoyl]-L-lysyl-[glycine-cleavage complex H protein] + glycine + H(+) = N(6)-[(R)-S(8)-aminomethyldihydrolipoyl]-L-lysyl-[glycine-cleavage complex H protein] + CO2. Functionally, the glycine cleavage system catalyzes the degradation of glycine. The P protein binds the alpha-amino group of glycine through its pyridoxal phosphate cofactor; CO(2) is released and the remaining methylamine moiety is then transferred to the lipoamide cofactor of the H protein. In Pseudomonas fluorescens (strain Pf0-1), this protein is Glycine dehydrogenase (decarboxylating) 1.